Reading from the N-terminus, the 528-residue chain is MPAVRTKSGHGVEYTDEAITATYSYNTTRVEKEANGDVTVQPIQLHLKFRTQRKVQRTGVMLIGWGGNNGTTVTAALMAHKHRXSWRTKTGTKQPDYLGSITQSSTMSVGLTSEMEEVFVPMKALVPMINPAELVIGGWDCSGMNIADAMRRAQVLDVTLQDALYNYLKDMHPLPAAFDLDFVAENQLSRADNIMQTKNKWESVEQLRADIRNFREKNSLEEVIVLWTANTERFSEHITGVHDTADHLIDAIRRNENEIAPSVLYATAAIMEGCSYVNGAPQNTLCAGLIELARRHGVFVVGDDFKSGQTKVKSGLVEFFMDAGIKPECIASYNHLGNNDGYNLAAPKQFRSKEVTKGGVLDDMVSSNSILYPPGSRGPDHCIVIKYLPYVGDSKRALDEYNFSIFMGGEQTVVLHNTCQDSLLAAPLIIDLVVLTELMHRVTVTQCDGEDCCDKKEKMTSYTHMETVLSLLSYLLKAPRVPEGTPVVNGLNRQGQAIKNVLRALVGLPPDNNMQLECRLPFLRGVGS.

22 residues coordinate NAD(+): glycine 66, glycine 67, asparagine 68, asparagine 69, aspartate 140, glutamine 187, arginine 190, threonine 228, alanine 229, asparagine 230, threonine 231, glycine 279, aspartate 304, serine 307, asparagine 338, asparagine 339, aspartate 340, lysine 353, glycine 392, aspartate 393, aspartate 421, and serine 422.

Belongs to the myo-inositol 1-phosphate synthase family. It depends on NAD(+) as a cofactor.

The protein localises to the cytoplasm. Its subcellular location is the cytosol. It carries out the reaction D-glucose 6-phosphate = 1D-myo-inositol 3-phosphate. Its pathway is polyol metabolism; myo-inositol biosynthesis; myo-inositol from D-glucose 6-phosphate: step 1/2. With respect to regulation, activated by ammonium ions. In terms of biological role, key enzyme in myo-inositol biosynthesis pathway that catalyzes the conversion of glucose 6-phosphate to 1-myo-inositol 1-phosphate in a NAD-dependent manner. Rate-limiting enzyme in the synthesis of all inositol-containing compounds. De novo-synthesized myo-inositol is essential for incorporation into GPI (glycosylphosphatidylinositol) glycolipids in the bloodstream form. The polypeptide is Inositol-3-phosphate synthase (Trypanosoma brucei brucei).